The primary structure comprises 306 residues: Beta-lactamase (306 aa).

The N-terminal stretch at 1-36 (MKLKTKASIKFGICVGLLCLSITGFTPFFNSTHAEA) is a signal peptide. The active-site Acyl-ester intermediate is the serine 89. Position 251–253 (251–253 (KSG)) interacts with substrate.

It belongs to the class-A beta-lactamase family.

It localises to the secreted. It carries out the reaction a beta-lactam + H2O = a substituted beta-amino acid. Functionally, this protein is a beta-lactamase with a substrate specificity for penicillins. The chain is Beta-lactamase (penP) from Bacillus subtilis (strain 168).